The sequence spans 971 residues: Isoleucine--tRNA ligase (971 aa).

The 'HIGH' region signature appears at 64-74 (PYANGHIHIGH). An L-isoleucyl-5'-AMP-binding site is contributed by Glu-602. Residues 643–647 (KMSKS) carry the 'KMSKS' region motif. Position 646 (Lys-646) interacts with ATP.

This sequence belongs to the class-I aminoacyl-tRNA synthetase family. IleS type 1 subfamily. Monomer.

The protein localises to the cytoplasm. It carries out the reaction tRNA(Ile) + L-isoleucine + ATP = L-isoleucyl-tRNA(Ile) + AMP + diphosphate. Its function is as follows. Catalyzes the attachment of isoleucine to tRNA(Ile). As IleRS can inadvertently accommodate and process structurally similar amino acids such as valine, to avoid such errors it has two additional distinct tRNA(Ile)-dependent editing activities. One activity is designated as 'pretransfer' editing and involves the hydrolysis of activated Val-AMP. The other activity is designated 'posttransfer' editing and involves deacylation of mischarged Val-tRNA(Ile). This Bartonella henselae (strain ATCC 49882 / DSM 28221 / CCUG 30454 / Houston 1) (Rochalimaea henselae) protein is Isoleucine--tRNA ligase.